The sequence spans 226 residues: ATP synthase F(0) complex subunit a (226 aa).

5 helical membrane-spanning segments follow: residues 9 to 29 (FITP…FPSL), 68 to 88 (WTLM…LGLL), 97 to 117 (QLSM…ITGF), 138 to 158 (IPML…ALAV), and 184 to 204 (ISPT…ILEF).

It belongs to the ATPase A chain family. In terms of assembly, component of the ATP synthase complex composed at least of ATP5F1A/subunit alpha, ATP5F1B/subunit beta, ATP5MC1/subunit c (homooctomer), MT-ATP6/subunit a, MT-ATP8/subunit 8, ATP5ME/subunit e, ATP5MF/subunit f, ATP5MG/subunit g, ATP5MK/subunit k, ATP5MJ/subunit j, ATP5F1C/subunit gamma, ATP5F1D/subunit delta, ATP5F1E/subunit epsilon, ATP5PF/subunit F6, ATP5PB/subunit b, ATP5PD/subunit d, ATP5PO/subunit OSCP. ATP synthase complex consists of a soluble F(1) head domain (subunits alpha(3) and beta(3)) - the catalytic core - and a membrane F(0) domain - the membrane proton channel (subunits c, a, 8, e, f, g, k and j). These two domains are linked by a central stalk (subunits gamma, delta, and epsilon) rotating inside the F1 region and a stationary peripheral stalk (subunits F6, b, d, and OSCP). Interacts with DNAJC30; interaction is direct.

It is found in the mitochondrion inner membrane. The catalysed reaction is H(+)(in) = H(+)(out). Its function is as follows. Subunit a, of the mitochondrial membrane ATP synthase complex (F(1)F(0) ATP synthase or Complex V) that produces ATP from ADP in the presence of a proton gradient across the membrane which is generated by electron transport complexes of the respiratory chain. ATP synthase complex consist of a soluble F(1) head domain - the catalytic core - and a membrane F(1) domain - the membrane proton channel. These two domains are linked by a central stalk rotating inside the F(1) region and a stationary peripheral stalk. During catalysis, ATP synthesis in the catalytic domain of F(1) is coupled via a rotary mechanism of the central stalk subunits to proton translocation. With the subunit c (ATP5MC1), forms the proton-conducting channel in the F(0) domain, that contains two crucial half-channels (inlet and outlet) that facilitate proton movement from the mitochondrial intermembrane space (IMS) into the matrix. Protons are taken up via the inlet half-channel and released through the outlet half-channel, following a Grotthuss mechanism. This chain is ATP synthase F(0) complex subunit a, found in Capra hircus (Goat).